The sequence spans 243 residues: Collagen triple helix repeat-containing protein 1 (243 aa).

An N-terminal signal peptide occupies residues 1–30; that stretch reads MRPQGPAASPQRLRGLLLLLLLQLPAPSSA. The Collagen-like domain occupies 57–90; that stretch reads QGPAGVPGRDGSPGANGIPGTPGIPGRDGFKGEK. Residues 62–85 are disordered; that stretch reads VPGRDGSPGANGIPGTPGIPGRDG. Residue Asn186 is glycosylated (N-linked (GlcNAc...) asparagine).

Post-translationally, N-glycosylated. In terms of tissue distribution, isoform 1 is expressed in calcified atherosclerotic plaque and chondrocyte-like cells.

Its subcellular location is the secreted. It localises to the extracellular space. The protein localises to the extracellular matrix. May act as a negative regulator of collagen matrix deposition. The sequence is that of Collagen triple helix repeat-containing protein 1 (CTHRC1) from Homo sapiens (Human).